The primary structure comprises 2615 residues: Polycystin-1-like protein 1 (2615 aa).

Over 1–1524 (MDVDEDQHAV…VSSISEFQSH (1524 aa)) the chain is Extracellular. The disordered stretch occupies residues 17–93 (IQANPELCVS…GTNSFSNPPP (77 aa)). 7 N-linked (GlcNAc...) asparagine glycosylation sites follow: Asn-224, Asn-297, Asn-306, Asn-390, Asn-440, Asn-534, and Asn-619. PKD domains are found at residues 291–373 (SVSV…VQKR) and 375–456 (MANR…VREP). Positions 457-1349 (CQPPPVKNMG…GEEDYLHKRN (893 aa)) constitute an REJ domain. The tract at residues 749–815 (SSKSDLPSNL…GEPMEEYSSL (67 aa)) is disordered. Residues 778–789 (ALSNLGSISAES) are compositionally biased toward polar residues. Positions 1364 to 1512 (RFTGLSENSQ…SVLRRKLNAT (149 aa)) constitute a GAIN-B domain. Residue Asn-1458 is glycosylated (N-linked (GlcNAc...) asparagine). The cysteines at positions 1468 and 1494 are disulfide-linked. The GPS stretch occupies residues 1468–1512 (CVFWDKTEWRSEGPYPQPGSSPEKVNCSYHHLAPVSVLRRKLNAT). Asn-1510 carries an N-linked (GlcNAc...) asparagine glycan. The chain crosses the membrane as a helical span at residues 1525 to 1545 (PHNLLPGIFSAFLLVLYGILV). Over 1546-1732 (SKSRYVDCHE…PPSRSYLHTQ (187 aa)) the chain is Cytoplasmic. In terms of domain architecture, PLAT spans 1573-1690 (QLYAVVIDTG…LGGHVLREFF (118 aa)). A helical transmembrane segment spans residues 1733 to 1753 (RLAVSFCLLCVYSCLTALVTV). The Extracellular portion of the chain corresponds to 1754–1772 (RDHQQRPLDVGPTAITLEP). The chain crosses the membrane as a helical span at residues 1773 to 1793 (FCMALLCTLLACPVAQLLSLL). The Cytoplasmic segment spans residues 1794–1905 (FRCSKEARGD…ELGSQKSRVC (112 aa)). The segment at 1807–1840 (STQWPLRGVKTETPQGHDSSGRPDSRQPSPHPTS) is disordered. The helical transmembrane segment at 1906-1926 (LLWSSSVAWAISGSASLACGL) threads the bilayer. Over 1927 to 1950 (GTGFLGYWFVPAQCMWWLYLLLLS) the chain is Extracellular. The helical transmembrane segment at 1951–1971 (LVCCAFITQPLMICLAALVFA) threads the bilayer. The Cytoplasmic portion of the chain corresponds to 1972-2057 (WKRKHDSKFF…ERLRRESIMQ (86 aa)). The helical transmembrane segment at 2058–2078 (AALRDMTTHSIMLLLLLFIAY) threads the bilayer. Topologically, residues 2079–2288 (GRFCPGEISL…IFYSDSALKY (210 aa)) are extracellular. Residues 2289–2309 (LLMLSELLFLVLNVIHLCFQL) traverse the membrane as a helical segment. Residues 2310-2332 (WGMTTKGILSYWRKPRHWLELSM) lie on the Cytoplasmic side of the membrane. A helical transmembrane segment spans residues 2333–2353 (VGVAIAYYAASGHLTTLAVNI). The Extracellular portion of the chain corresponds to 2354 to 2379 (TDQFHKGLYQRLVDIGLMVSWHQRAR). A helical transmembrane segment spans residues 2380–2400 (CLQGILLFLWMLKYVHLLSSL). The Cytoplasmic segment spans residues 2401–2405 (STMTP). The chain crosses the membrane as a helical span at residues 2406–2426 (FSAVTCFPLFRVLLVGALLLA). Residues 2427–2483 (AHYHSRWFLLFTGTLSHGTSAEAFPGLLLQFPGRSKKDSWHNCLKSDHGVMRCYYGT) are Extracellular-facing. Residues 2484–2504 (LFLLLATLGFRMLRATFLTVF) form a helical membrane-spanning segment. The Cytoplasmic segment spans residues 2505 to 2615 (QNRKSSHRKP…VSGPLAAESE (111 aa)). A disordered region spans residues 2589 to 2615 (RAGDSPPVGSSEYQATGVSGPLAAESE).

It belongs to the polycystin family. In terms of assembly, heterodimer. Interacts with PKD2 to form a calcium channel. Interacts with PKD2L1; to form ciliary calcium channel. May interact with GNA12, GNAS, GNAI1 and GNAI2. In testis, strong expression in Leydig cells, low level in seminal ducts, myoid cells and tunica vaginalis. Other tissues, including adrenal gland and heart myocardium, also show low expression. In embryo, highly expressed in the node.

It is found in the cell projection. The protein resides in the cilium membrane. Its function is as follows. Component of a calcium-permeant ion channel formed by PKD1L2 and PKD1L1 in primary cilia, where it controls cilium calcium concentration, without affecting cytoplasmic calcium concentration, and regulates sonic hedgehog/SHH signaling and GLI2 transcription. The PKD1L1:PKD2L1 channel complex is mechanosensitive only at high pressures and is highly temperature sensitive. Also involved in left/right axis specification downstream of nodal flow by forming a complex with PKD2 in cilia to facilitate flow detection in left/right patterning. May function as a G-protein-coupled receptor. The polypeptide is Polycystin-1-like protein 1 (Mus musculus (Mouse)).